Reading from the N-terminus, the 274-residue chain is Methionine-binding lipoprotein MetQ (274 aa).

The N-terminal stretch at 1–19 (MKKLFLGALLLVFAGVMAA) is a signal peptide. Cys-20 carries the N-palmitoyl cysteine lipid modification. Cys-20 carries the S-diacylglycerol cysteine lipid modification.

It belongs to the NlpA lipoprotein family. The complex is composed of two ATP-binding proteins (MetN), two transmembrane proteins (MetP) and a solute-binding protein (metQ).

The protein localises to the cell membrane. Part of the ABC transporter complex MetNPQ involved in methionine import. Binds the methionine and transfers it to the membrane-bound permease. It has also been shown to be involved in methionine sulfoxide transport. This is Methionine-binding lipoprotein MetQ (metQ) from Bacillus subtilis (strain 168).